The sequence spans 188 residues: dCTP deaminase (188 aa).

DCTP contacts are provided by residues 111–116 (KSTYAR), 135–137 (TLE), Gln-156, Tyr-170, and Gln-180. Glu-137 functions as the Proton donor/acceptor in the catalytic mechanism.

The protein belongs to the dCTP deaminase family. Homotrimer.

It catalyses the reaction dCTP + H2O + H(+) = dUTP + NH4(+). The protein operates within pyrimidine metabolism; dUMP biosynthesis; dUMP from dCTP (dUTP route): step 1/2. Its function is as follows. Catalyzes the deamination of dCTP to dUTP. The sequence is that of dCTP deaminase from Neisseria meningitidis serogroup C / serotype 2a (strain ATCC 700532 / DSM 15464 / FAM18).